The following is a 436-amino-acid chain: tRNA(Ile)-lysidine synthase (436 aa).

ATP is bound at residue 27–32 (SGGVDS).

This sequence belongs to the tRNA(Ile)-lysidine synthase family.

It localises to the cytoplasm. It catalyses the reaction cytidine(34) in tRNA(Ile2) + L-lysine + ATP = lysidine(34) in tRNA(Ile2) + AMP + diphosphate + H(+). Its function is as follows. Ligates lysine onto the cytidine present at position 34 of the AUA codon-specific tRNA(Ile) that contains the anticodon CAU, in an ATP-dependent manner. Cytidine is converted to lysidine, thus changing the amino acid specificity of the tRNA from methionine to isoleucine. The sequence is that of tRNA(Ile)-lysidine synthase from Vibrio vulnificus (strain CMCP6).